Consider the following 143-residue polypeptide: Auxin-responsive protein SAUR67 (143 aa).

Belongs to the ARG7 family.

Its subcellular location is the cell membrane. In terms of biological role, may promote auxin-stimulated organ elongation, such as hypocotyls, stamen filaments and petals. In Arabidopsis thaliana (Mouse-ear cress), this protein is Auxin-responsive protein SAUR67.